A 346-amino-acid polypeptide reads, in one-letter code: MALSRVDVINMRIWVLSIICACLTYVNVTVHLVAVHFPNLGFPCAYYEINDMKAINLSIRNDIRSLTPQLYLNPIQLICYVVFMDICFFFILVYYIVCCVKVFSSEKTPNINQSTRDITWMGDSLSCFQFVLTMDTYQFFVTCLSFRLVTLAAFTYCLFFICFTAFTLTMITQYQSSERSFFVLKRIHPKLKGTIKYKTIIINMIELMLGFSSMVFAITICLGLGNNFYIKSSTVAFASINTFFVMSFVYSLVIELILHQYVKVQFGLHFGILFGILGLTYPILKYDSLFKTEWTVKFIVNLAVITIVCLSFIICRLIRFFMRKHHNYKKLPTTVEDLDVLEEANE.

Residues 1-12 (MALSRVDVINMR) are Intravirion-facing. A helical transmembrane segment spans residues 13-33 (IWVLSIICACLTYVNVTVHLV). Topologically, residues 34–76 (AVHFPNLGFPCAYYEINDMKAINLSIRNDIRSLTPQLYLNPIQ) are virion surface. A helical membrane pass occupies residues 77-97 (LICYVVFMDICFFFILVYYIV). At 98-117 (CCVKVFSSEKTPNINQSTRD) the chain is on the intravirion side. Residues 118–140 (ITWMGDSLSCFQFVLTMDTYQFF) form a helical membrane-spanning segment. Residues 141–147 (VTCLSFR) are Virion surface-facing. The chain crosses the membrane as a helical span at residues 148-168 (LVTLAAFTYCLFFICFTAFTL). At 169–199 (TMITQYQSSERSFFVLKRIHPKLKGTIKYKT) the chain is on the intravirion side. Residues 200-220 (IIINMIELMLGFSSMVFAITI) form a helical membrane-spanning segment. The Virion surface portion of the chain corresponds to 221–236 (CLGLGNNFYIKSSTVA). Residues 237-257 (FASINTFFVMSFVYSLVIELI) form a helical membrane-spanning segment. At 258–263 (LHQYVK) the chain is on the intravirion side. A helical membrane pass occupies residues 264 to 284 (VQFGLHFGILFGILGLTYPIL). The Virion surface portion of the chain corresponds to 285–293 (KYDSLFKTE). The helical transmembrane segment at 294 to 314 (WTVKFIVNLAVITIVCLSFII) threads the bilayer. The Intravirion portion of the chain corresponds to 315–346 (CRLIRFFMRKHHNYKKLPTTVEDLDVLEEANE).

The protein belongs to the herpesviridae glycoprotein M family. As to quaternary structure, interacts (via N-terminus) with gN (via N-terminus). The gM-gN heterodimer forms the gCII complex.

The protein localises to the virion membrane. It localises to the host Golgi apparatus. The protein resides in the host trans-Golgi network. It is found in the host endosome membrane. Its subcellular location is the host nucleus inner membrane. Envelope glycoprotein important for virion assembly and egress. Plays a role in the correct incorporation of gH-gL into virion membrane. Directs the glycoprotein N (gN) to the host trans-Golgi network. This Homo sapiens (Human) protein is Envelope glycoprotein M.